A 249-amino-acid chain; its full sequence is Small ribosomal subunit protein uS2 (249 aa).

This sequence belongs to the universal ribosomal protein uS2 family.

This Acinetobacter baylyi (strain ATCC 33305 / BD413 / ADP1) protein is Small ribosomal subunit protein uS2.